Consider the following 415-residue polypeptide: Gamma-glutamyl phosphate reductase (415 aa).

It belongs to the gamma-glutamyl phosphate reductase family.

The protein resides in the cytoplasm. The enzyme catalyses L-glutamate 5-semialdehyde + phosphate + NADP(+) = L-glutamyl 5-phosphate + NADPH + H(+). It functions in the pathway amino-acid biosynthesis; L-proline biosynthesis; L-glutamate 5-semialdehyde from L-glutamate: step 2/2. Functionally, catalyzes the NADPH-dependent reduction of L-glutamate 5-phosphate into L-glutamate 5-semialdehyde and phosphate. The product spontaneously undergoes cyclization to form 1-pyrroline-5-carboxylate. The protein is Gamma-glutamyl phosphate reductase of Mycobacterium sp. (strain JLS).